Here is a 422-residue protein sequence, read N- to C-terminus: MILVKDAIITGKKQDLLVEGNIIKKIGNISISEVSKDETEIIDGKNCVLIPGLINTHTHVPMSLFRGVADDIPLMEWLSGHIWPMESKLNEKIVYAGTLLGTIEMIKSGTTAFNDMYFFLDSIIKAVDETGIRSTIAYGMIDLFDEEKREKELKTAKESLEMIKNLNNSRITGALGPHAPYTCSKEILESTNALAREYNVPIHIHMNETLDEINQVVEKTGMRPFEYLNSFGFFDNVNTICAHCVHLSASEIQIMKEKNIFAAHNPVSNLKLASGVSPVLKLLENNIPVTLGTDGCGSNNNMNLFEEIKAAALIHKGVNLNPVAVIAKDAFDFGTKNGAKALNINSGEIKEGKLADFVLINMKKPYLTPKENIESHLVYSFNGVVDKVVIDGKLVLNDGKMVNIDEEKVYEIAEEAYFELAN.

Zn(2+)-binding residues include His57 and His59. Residues Glu86 and His178 each contribute to the substrate site. His205 is a Zn(2+) binding site. Residues Glu208 and Asp294 each coordinate substrate. Asp294 is a binding site for Zn(2+).

It belongs to the metallo-dependent hydrolases superfamily. MTA/SAH deaminase family. Homotetramer. It depends on Zn(2+) as a cofactor.

The catalysed reaction is 5'-deoxyadenosine + H2O + H(+) = 5'-deoxyinosine + NH4(+). It carries out the reaction S-adenosyl-L-homocysteine + H2O + H(+) = S-inosyl-L-homocysteine + NH4(+). It catalyses the reaction S-methyl-5'-thioadenosine + H2O + H(+) = S-methyl-5'-thioinosine + NH4(+). The enzyme catalyses adenosine + H2O + H(+) = inosine + NH4(+). Its pathway is amino-acid biosynthesis; S-adenosyl-L-methionine biosynthesis. Its function is as follows. Catalyzes the deamination of three SAM-derived enzymatic products, namely 5'-deoxyadenosine, S-adenosyl-L-homocysteine, and 5'-methylthioadenosine, to produce the inosine analogs. Can also deaminate adenosine. The preferred substrate for this enzyme is 5'-deoxyadenosine, but all these substrates are efficiently deaminated. Likely functions in a S-adenosyl-L-methionine (SAM) recycling pathway from S-adenosyl-L-homocysteine (SAH) produced from SAM-dependent methylation reactions. May also be involved in the recycling of 5'-deoxyadenosine, whereupon the 5'-deoxyribose moiety of 5'-deoxyinosine is further metabolized to deoxyhexoses used for the biosynthesis of aromatic amino acids in methanogens. The sequence is that of 5'-deoxyadenosine deaminase from Methanococcus maripaludis (strain DSM 14266 / JCM 13030 / NBRC 101832 / S2 / LL).